The primary structure comprises 684 residues: Probable phosphoenolpyruvate synthase (684 aa).

His-424 functions as the Tele-phosphohistidine intermediate in the catalytic mechanism. Substrate-binding residues include Arg-517, Arg-564, and Glu-661. A Mg(2+)-binding site is contributed by Glu-661.

It belongs to the PEP-utilizing enzyme family. It depends on Mg(2+) as a cofactor.

It catalyses the reaction pyruvate + ATP + H2O = phosphoenolpyruvate + AMP + phosphate + 2 H(+). It participates in carbohydrate biosynthesis; gluconeogenesis. In terms of biological role, catalyzes the phosphorylation of pyruvate to phosphoenolpyruvate. The polypeptide is Probable phosphoenolpyruvate synthase (ppsA) (Methanothermobacter thermautotrophicus (strain ATCC 29096 / DSM 1053 / JCM 10044 / NBRC 100330 / Delta H) (Methanobacterium thermoautotrophicum)).